Reading from the N-terminus, the 388-residue chain is uncharacterized protein (388 aa).

Its subcellular location is the mitochondrion. This is an uncharacterized protein from Dictyostelium citrinum (Slime mold).